A 518-amino-acid polypeptide reads, in one-letter code: MESTDSSPPLSMTDTEKKGDAVTTVTDESSVSEYERFLHLENVFSGASRKKLLRKLDLRLLPTLSFLYLMCSLDKSNAGNAKLFGLLEDLGMSGTQYNLALMYFFFTYGLSEPVSNIMLRRVGPKIWFPFIVCAWGLITTLTSQASSYAGFVVIRLMLGITEAGLYPGAYFILSMWYTPKEIGTRMAIFYGANTTAGAFGGVIAYGVGSLDGNLGWRAWRWLFLIEGCITIFAGLACLFCLPAFPHQYQAGKGTKWLTDEELEYASLRVKYANGPVSSTYTFRWSDVVAAAKDRKTYFMMMLFWWGGSVPTYSLSYTLPTMVANLGYTAVKAQVMTTPPYIFATCVCVAVGYISDQTQRRYLCIMGAYTLGLIGIIILWITVHHPSIPGVSYFAIFLAAAGYSAQAPIVGAWTASNITNPSKRAAAIGLLMLLGSVGGGSIGSNIYISSEAPTYPLGFGFSVGATVLGAMIPATIHWFLMRKENKRRGGLDVAEIERKYTTEELGEMGEDSPLFRFVL.

The segment covering 1 to 13 (MESTDSSPPLSMT) has biased composition (polar residues). The interval 1–24 (MESTDSSPPLSMTDTEKKGDAVTT) is disordered. The next 9 membrane-spanning stretches (helical) occupy residues 99 to 119 (LALMYFFFTYGLSEPVSNIML), 122 to 142 (VGPKIWFPFIVCAWGLITTLT), 156 to 176 (LMLGITEAGLYPGAYFILSMW), 187 to 207 (AIFYGANTTAGAFGGVIAYGV), 221 to 241 (WLFLIEGCITIFAGLACLFCL), 298 to 318 (FMMMLFWWGGSVPTYSLSYTL), 334 to 354 (VMTTPPYIFATCVCVAVGYIS), 362 to 382 (LCIMGAYTLGLIGIIILWITV), and 392 to 412 (YFAIFLAAAGYSAQAPIVGAW). N416 carries an N-linked (GlcNAc...) asparagine glycan. The next 2 membrane-spanning stretches (helical) occupy residues 427–447 (IGLLMLLGSVGGGSIGSNIYI) and 455–475 (PLGFGFSVGATVLGAMIPATI).

It belongs to the major facilitator superfamily.

The protein localises to the cell membrane. In terms of biological role, MFS-type transporter; part of the gene cluster that mediates the biosynthesis of communesins, a prominent class of indole alkaloids with great potential as pharmaceuticals. With the MFS transporter cnsL, is most likely responsible for cummunesins secretion and thereby may contribute to intrinsic resistance. This chain is MFS-type transporter cnsO, found in Penicillium expansum (Blue mold rot fungus).